Consider the following 482-residue polypeptide: ATP synthase subunit beta (482 aa).

An ATP-binding site is contributed by 161 to 168; it reads GGAGVGKT.

It belongs to the ATPase alpha/beta chains family. As to quaternary structure, F-type ATPases have 2 components, CF(1) - the catalytic core - and CF(0) - the membrane proton channel. CF(1) has five subunits: alpha(3), beta(3), gamma(1), delta(1), epsilon(1). CF(0) has four main subunits: a(1), b(1), b'(1) and c(9-12).

It localises to the cellular thylakoid membrane. It catalyses the reaction ATP + H2O + 4 H(+)(in) = ADP + phosphate + 5 H(+)(out). Functionally, produces ATP from ADP in the presence of a proton gradient across the membrane. The catalytic sites are hosted primarily by the beta subunits. This is ATP synthase subunit beta from Gloeothece citriformis (strain PCC 7424) (Cyanothece sp. (strain PCC 7424)).